The sequence spans 382 residues: 2-heptyl-3-hydroxy-4(1H)-quinolone synthase (382 aa).

Belongs to the 3-hydroxybenzoate 6-hydroxylase family.

It catalyses the reaction 2-heptyl-4(1H)-quinolone + NADH + O2 + H(+) = 2-heptyl-3-hydroxy-4(1H)-quinolone + NAD(+) + H2O. Involved in the terminal step of the biosynthesis of quinolone which in addition to serve as a potent signal for quorum sensing, chelates iron and promotes the formation of membrane vesicles (MVs). Catalyzes the hydroxylation of 2-heptyl-4-quinolone (C7-HHQ) to yield 2-heptyl-3-hydroxy-4-quinolone (PQS). PqsH is also able to hydroxylate HHQ analogs having alkyl side-chain lengths of 3 (C3-HHQ), 5 (C5-HHQ) and 9 (C9-HHQ) carbons, however catalytic efficiencies are significantly reduced for substrates with alkyl side-chain lengths below 7 carbons. In Pseudomonas aeruginosa (strain UCBPP-PA14), this protein is 2-heptyl-3-hydroxy-4(1H)-quinolone synthase (pqsH).